The primary structure comprises 1268 residues: Meiosis inhibitor protein 1 (1268 aa).

As to expression, strongly expressed in testis, weakly in brain, and not detected in spleen, liver, kidney, small intestine or colon.

In terms of biological role, required for normal meiotic chromosome synapsis. May be involved in the formation of meiotic double-strand breaks (DSBs) in spermatocytes. In Mus musculus (Mouse), this protein is Meiosis inhibitor protein 1.